We begin with the raw amino-acid sequence, 63 residues long: DNA gyrase inhibitor YacG (63 aa).

C9, C12, C28, and C32 together coordinate Zn(2+).

Belongs to the DNA gyrase inhibitor YacG family. Interacts with GyrB. Requires Zn(2+) as cofactor.

Inhibits all the catalytic activities of DNA gyrase by preventing its interaction with DNA. Acts by binding directly to the C-terminal domain of GyrB, which probably disrupts DNA binding by the gyrase. In Salmonella choleraesuis (strain SC-B67), this protein is DNA gyrase inhibitor YacG.